The chain runs to 368 residues: Proteinase-activated receptor 3 (368 aa).

Positions 1-21 (MEMKVLILVGVRLLFLPTTVC) are cleaved as a signal peptide. A propeptide spans 22-37 (QSGMKHVSDNSALTAE) (removed for receptor activation). Over 38–93 (SFNGNEHSFEEFPLSDIEGWTGATTTIKAKCPEESITTLHVNNATMGYLRSSLSTK) the chain is Extracellular. Asn80 carries an N-linked (GlcNAc...) asparagine glycan. A helical membrane pass occupies residues 94–114 (VIPAIYILVFVIGVPANIVTL). At 115 to 123 (WKLSSRTKS) the chain is on the cytoplasmic side. The chain crosses the membrane as a helical span at residues 124 to 144 (ICLVIFHTNLAIADLLFCVTL). The Extracellular segment spans residues 145–166 (PFKIAYHLNGNDWVFGEVMCRV). Cysteines 164 and 243 form a disulfide. The chain crosses the membrane as a helical span at residues 167–187 (TTVAFYGNMYCAILILTCMGI). Residues 188–208 (NRYLATVHPFTYRKLPKRNFT) are Cytoplasmic-facing. Residues 209–229 (LLMCGVVWVMVVLYMLPLAIL) traverse the membrane as a helical segment. Topologically, residues 230–257 (KQEYHLVQPGITTCHDVHDTCESPLPFQ) are extracellular. A helical membrane pass occupies residues 258-278 (FYYFVSLAFFGFLIPFVVSVF). At 279 to 300 (CYTTLIHKLNAQDRKWLRYIKA) the chain is on the cytoplasmic side. Residues 301-321 (VLLILVIFTICFAPTNIILII) form a helical membrane-spanning segment. Residues 322 to 338 (HHANYYYSNTDSLYFMY) lie on the Extracellular side of the membrane. Residues 339–359 (LIALCLGSLNSCLDPFLYFIM) traverse the membrane as a helical segment. The Cytoplasmic portion of the chain corresponds to 360–368 (SKIVDQLTS).

This sequence belongs to the G-protein coupled receptor 1 family. Interacts with INSC/inscuteable and GPSM2. In terms of processing, a proteolytic cleavage generates a new N-terminus that functions as a tethered ligand.

Its subcellular location is the cell membrane. Receptor for activated thrombin coupled to G proteins that stimulate phosphoinositide hydrolysis. This Rattus norvegicus (Rat) protein is Proteinase-activated receptor 3 (F2rl2).